The chain runs to 314 residues: Cytochrome c biogenesis protein CcsA (314 aa).

A run of 8 helical transmembrane segments spans residues 15–35 (VSFIGILIFYFLLINLPISLI), 48–68 (LITILINLFIALQLISRWIIS), 73–93 (ISNLYESLYFLVWGITLGQLL), 102–122 (IIPAIAIPIELLTIAFACFVL), 148–168 (VMLSYAALIMGSLLSASVLFI), 216–236 (SILVGFVLLTLGLITGAIWAN), 250–267 (TWAFISWLFYAAYLHMRI), and 277–297 (ALLATSGFFVVLICYIGVNFL).

It belongs to the CcmF/CycK/Ccl1/NrfE/CcsA family. As to quaternary structure, may interact with ccs1.

It localises to the cellular thylakoid membrane. In terms of biological role, required during biogenesis of c-type cytochromes (cytochrome c6 and cytochrome f) at the step of heme attachment. This is Cytochrome c biogenesis protein CcsA from Prochlorococcus marinus subsp. pastoris (strain CCMP1986 / NIES-2087 / MED4).